The chain runs to 158 residues: Auxin-responsive protein IAA31 (158 aa).

A compositionally biased stretch (low complexity) spans 1–40 (MEVSNSCSSFSSSSVDSTKPSPSESSVNLSLSLTFPSTSP). The disordered stretch occupies residues 1 to 49 (MEVSNSCSSFSSSSVDSTKPSPSESSVNLSLSLTFPSTSPQREARQDWP). An EAR-like (transcriptional repression) motif is present at residues 29–33 (LSLSL). In terms of domain architecture, PB1 spans 72–157 (SLFVKVYMEG…RRLKITRPER (86 aa)).

The protein belongs to the Aux/IAA family. As to quaternary structure, homodimers and heterodimers.

The protein resides in the nucleus. In terms of biological role, aux/IAA proteins are short-lived transcriptional factors that function as repressors of early auxin response genes at low auxin concentrations. Repression is thought to result from the interaction with auxin response factors (ARFs), proteins that bind to the auxin-responsive promoter element (AuxRE). Formation of heterodimers with ARF proteins may alter their ability to modulate early auxin response genes expression. The chain is Auxin-responsive protein IAA31 (IAA31) from Arabidopsis thaliana (Mouse-ear cress).